The sequence spans 346 residues: Holliday junction branch migration complex subunit RuvB (346 aa).

Residues 2-183 (TDDRIIGAGA…FGIVQRLEFY (182 aa)) are large ATPase domain (RuvB-L). ATP contacts are provided by residues Ile22, Arg23, Gly64, Lys67, Thr68, Thr69, 130–132 (EDF), Arg173, Tyr183, and Arg220. Thr68 contacts Mg(2+). Residues 184–254 (SVEELTRIVR…VAQAAMKMLK (71 aa)) form a small ATPAse domain (RuvB-S) region. Residues 257-346 (PEGFDELDRR…DLFAEVPDVG (90 aa)) form a head domain (RuvB-H) region. Positions 293, 312, and 317 each coordinate DNA.

Belongs to the RuvB family. In terms of assembly, homohexamer. Forms an RuvA(8)-RuvB(12)-Holliday junction (HJ) complex. HJ DNA is sandwiched between 2 RuvA tetramers; dsDNA enters through RuvA and exits via RuvB. An RuvB hexamer assembles on each DNA strand where it exits the tetramer. Each RuvB hexamer is contacted by two RuvA subunits (via domain III) on 2 adjacent RuvB subunits; this complex drives branch migration. In the full resolvosome a probable DNA-RuvA(4)-RuvB(12)-RuvC(2) complex forms which resolves the HJ.

It is found in the cytoplasm. It carries out the reaction ATP + H2O = ADP + phosphate + H(+). In terms of biological role, the RuvA-RuvB-RuvC complex processes Holliday junction (HJ) DNA during genetic recombination and DNA repair, while the RuvA-RuvB complex plays an important role in the rescue of blocked DNA replication forks via replication fork reversal (RFR). RuvA specifically binds to HJ cruciform DNA, conferring on it an open structure. The RuvB hexamer acts as an ATP-dependent pump, pulling dsDNA into and through the RuvAB complex. RuvB forms 2 homohexamers on either side of HJ DNA bound by 1 or 2 RuvA tetramers; 4 subunits per hexamer contact DNA at a time. Coordinated motions by a converter formed by DNA-disengaged RuvB subunits stimulates ATP hydrolysis and nucleotide exchange. Immobilization of the converter enables RuvB to convert the ATP-contained energy into a lever motion, pulling 2 nucleotides of DNA out of the RuvA tetramer per ATP hydrolyzed, thus driving DNA branch migration. The RuvB motors rotate together with the DNA substrate, which together with the progressing nucleotide cycle form the mechanistic basis for DNA recombination by continuous HJ branch migration. Branch migration allows RuvC to scan DNA until it finds its consensus sequence, where it cleaves and resolves cruciform DNA. This is Holliday junction branch migration complex subunit RuvB from Stenotrophomonas maltophilia (strain R551-3).